The primary structure comprises 965 residues: Valine--tRNA ligase (965 aa).

Positions 1–12 are enriched in polar residues; it reads MEKTPATQTQAE. Residues 1-23 are disordered; it reads MEKTPATQTQAEPSLDKTYNPKE. The 'HIGH' region motif lies at 56 to 66; it reads PNVTGSLHMGH. Residues 568–572 carry the 'KMSKS' region motif; that stretch reads KMSKS. K571 contacts ATP. Positions 893 to 960 form a coiled coil; the sequence is MAGLVDKEAE…SKEKLLAQKE (68 aa).

Belongs to the class-I aminoacyl-tRNA synthetase family. ValS type 1 subfamily. As to quaternary structure, monomer.

It is found in the cytoplasm. It catalyses the reaction tRNA(Val) + L-valine + ATP = L-valyl-tRNA(Val) + AMP + diphosphate. In terms of biological role, catalyzes the attachment of valine to tRNA(Val). As ValRS can inadvertently accommodate and process structurally similar amino acids such as threonine, to avoid such errors, it has a 'posttransfer' editing activity that hydrolyzes mischarged Thr-tRNA(Val) in a tRNA-dependent manner. The chain is Valine--tRNA ligase from Photorhabdus laumondii subsp. laumondii (strain DSM 15139 / CIP 105565 / TT01) (Photorhabdus luminescens subsp. laumondii).